Reading from the N-terminus, the 483-residue chain is Aspartyl/glutamyl-tRNA(Asn/Gln) amidotransferase subunit B (483 aa).

The protein belongs to the GatB/GatE family. GatB subfamily. As to quaternary structure, heterotrimer of A, B and C subunits.

It catalyses the reaction L-glutamyl-tRNA(Gln) + L-glutamine + ATP + H2O = L-glutaminyl-tRNA(Gln) + L-glutamate + ADP + phosphate + H(+). The catalysed reaction is L-aspartyl-tRNA(Asn) + L-glutamine + ATP + H2O = L-asparaginyl-tRNA(Asn) + L-glutamate + ADP + phosphate + 2 H(+). Functionally, allows the formation of correctly charged Asn-tRNA(Asn) or Gln-tRNA(Gln) through the transamidation of misacylated Asp-tRNA(Asn) or Glu-tRNA(Gln) in organisms which lack either or both of asparaginyl-tRNA or glutaminyl-tRNA synthetases. The reaction takes place in the presence of glutamine and ATP through an activated phospho-Asp-tRNA(Asn) or phospho-Glu-tRNA(Gln). The sequence is that of Aspartyl/glutamyl-tRNA(Asn/Gln) amidotransferase subunit B from Rickettsia felis (strain ATCC VR-1525 / URRWXCal2) (Rickettsia azadi).